The chain runs to 296 residues: LysM and putative peptidoglycan-binding domain-containing protein 4 (296 aa).

Over 1–217 (MRHKELLSKT…PMDGADCGIQ (217 aa)) the chain is Extracellular. A glycan (N-linked (GlcNAc...) asparagine) is linked at N30. One can recognise a LysM domain in the interval 74–118 (LQRELAQEDSLNKLALQYGCKVADIKKVNNFIREQDLYALKSIKS). The chain crosses the membrane as a helical span at residues 218 to 238 (WWNAVFIMLLIGIVLPIFYLV). Topologically, residues 239 to 296 (YFKIQASGETPNSLNTAAIPNGSMAMGTVPGQAPRLAVAVPTVPSADSQFSQTTQAGN) are cytoplasmic.

It is found in the membrane. This Pongo abelii (Sumatran orangutan) protein is LysM and putative peptidoglycan-binding domain-containing protein 4 (LYSMD4).